The sequence spans 323 residues: 1D-myo-inositol 2-acetamido-2-deoxy-alpha-D-glucopyranoside deacetylase 1 (323 aa).

Zn(2+) is bound by residues H30, D33, and H165.

This sequence belongs to the MshB deacetylase family. The cofactor is Zn(2+).

It carries out the reaction 1D-myo-inositol 2-acetamido-2-deoxy-alpha-D-glucopyranoside + H2O = 1D-myo-inositol 2-amino-2-deoxy-alpha-D-glucopyranoside + acetate. Functionally, catalyzes the deacetylation of 1D-myo-inositol 2-acetamido-2-deoxy-alpha-D-glucopyranoside (GlcNAc-Ins) in the mycothiol biosynthesis pathway. The protein is 1D-myo-inositol 2-acetamido-2-deoxy-alpha-D-glucopyranoside deacetylase 1 of Catenulispora acidiphila (strain DSM 44928 / JCM 14897 / NBRC 102108 / NRRL B-24433 / ID139908).